A 234-amino-acid polypeptide reads, in one-letter code: Orotate phosphoribosyltransferase (234 aa).

Lys-30 serves as a coordination point for 5-phospho-alpha-D-ribose 1-diphosphate. An orotate-binding site is contributed by 38–39; it reads FF. 5-phospho-alpha-D-ribose 1-diphosphate-binding positions include 80 to 81, Arg-110, Lys-111, Lys-114, His-116, and 136 to 144; these read YK and DDVITAGTA. Thr-140 and Arg-168 together coordinate orotate.

Belongs to the purine/pyrimidine phosphoribosyltransferase family. PyrE subfamily. Homodimer.

The catalysed reaction is orotidine 5'-phosphate + diphosphate = orotate + 5-phospho-alpha-D-ribose 1-diphosphate. Its pathway is pyrimidine metabolism; UMP biosynthesis via de novo pathway; UMP from orotate: step 1/2. Its function is as follows. Catalyzes the transfer of a ribosyl phosphate group from 5-phosphoribose 1-diphosphate to orotate, leading to the formation of orotidine monophosphate (OMP). The sequence is that of Orotate phosphoribosyltransferase (URA5) from Metarhizium anisopliae (Entomophthora anisopliae).